The following is a 264-amino-acid chain: MSPTAGENILLKAEALSVYYGNSLAVKDVYLEVPKNKIVAFIGPSGCGKSTILRCFNRMNDLINGCRVQGRITFHDQEINDGRVDAVELRSRIGMVFQKPNPFPKSIYENIAYGARINGYQGDMDELVEKSLRQAALWDEVKDKLKDSGLALSGGQQQRLCIARTVAVQPEVILMDEPCSALDPISTLAIEELMQTLKEQYTIIIVTHNMQQASRTSDYTAFFNARATEGGGKMGYLVEFDTTEKIFDSPDQEATADYVSGRFG.

One can recognise an ABC transporter domain in the interval 11–250; it reads LKAEALSVYY…DTTEKIFDSP (240 aa). An ATP-binding site is contributed by 43-50; sequence GPSGCGKS.

This sequence belongs to the ABC transporter superfamily. Phosphate importer (TC 3.A.1.7) family. The complex is composed of two ATP-binding proteins (PstB), two transmembrane proteins (PstC and PstA) and a solute-binding protein (PstS).

The protein localises to the cell inner membrane. It carries out the reaction phosphate(out) + ATP + H2O = ADP + 2 phosphate(in) + H(+). Its function is as follows. Part of the ABC transporter complex PstSACB involved in phosphate import. Responsible for energy coupling to the transport system. The polypeptide is Phosphate import ATP-binding protein PstB (Synechococcus elongatus (strain ATCC 33912 / PCC 7942 / FACHB-805) (Anacystis nidulans R2)).